The chain runs to 249 residues: Leucyl/phenylalanyl-tRNA--protein transferase (249 aa).

The protein belongs to the L/F-transferase family.

It localises to the cytoplasm. The enzyme catalyses N-terminal L-lysyl-[protein] + L-leucyl-tRNA(Leu) = N-terminal L-leucyl-L-lysyl-[protein] + tRNA(Leu) + H(+). The catalysed reaction is N-terminal L-arginyl-[protein] + L-leucyl-tRNA(Leu) = N-terminal L-leucyl-L-arginyl-[protein] + tRNA(Leu) + H(+). It carries out the reaction L-phenylalanyl-tRNA(Phe) + an N-terminal L-alpha-aminoacyl-[protein] = an N-terminal L-phenylalanyl-L-alpha-aminoacyl-[protein] + tRNA(Phe). Functions in the N-end rule pathway of protein degradation where it conjugates Leu, Phe and, less efficiently, Met from aminoacyl-tRNAs to the N-termini of proteins containing an N-terminal arginine or lysine. The polypeptide is Leucyl/phenylalanyl-tRNA--protein transferase (Xanthomonas axonopodis pv. citri (strain 306)).